Consider the following 33-residue polypeptide: Pardaxin P-1 (33 aa).

This sequence belongs to the pardaxin family. In aqueous solution exists as a tetramer.

It localises to the secreted. It is found in the target cell membrane. Functionally, exhibits unusual shark repellent and surfactant properties. Forms voltage-dependent, ion-permeable channels in membranes. At high concentration causes cell membrane lysis. Causes death in killfish oryzias latipes in 30 minutes at a concentration of 25 micrograms/ml. The protein is Pardaxin P-1 of Pardachirus pavoninus (Peacock sole).